We begin with the raw amino-acid sequence, 260 residues long: NifU-like protein C1709.19c (260 aa).

A nifU region spans residues 161–231; it reads IKELIETSIR…IPEVENVVQV (71 aa).

Belongs to the NifU family.

In Schizosaccharomyces pombe (strain 972 / ATCC 24843) (Fission yeast), this protein is NifU-like protein C1709.19c.